The following is a 325-amino-acid chain: Probable tRNA-dihydrouridine synthase 2 (325 aa).

18–20 (PME) contributes to the FMN binding site. The active-site Proton donor is Cys-105. FMN contacts are provided by residues Lys-143, 208–210 (NGD), and 232–233 (GR).

Belongs to the Dus family. Requires FMN as cofactor.

The catalysed reaction is a 5,6-dihydrouridine in tRNA + NAD(+) = a uridine in tRNA + NADH + H(+). It carries out the reaction a 5,6-dihydrouridine in tRNA + NADP(+) = a uridine in tRNA + NADPH + H(+). Functionally, catalyzes the synthesis of 5,6-dihydrouridine (D), a modified base found in the D-loop of most tRNAs, via the reduction of the C5-C6 double bond in target uridines. The protein is Probable tRNA-dihydrouridine synthase 2 (dus2) of Bacillus subtilis (strain 168).